The primary structure comprises 75 residues: RNA-binding protein KhpA (75 aa).

The 47-residue stretch at 29 to 75 (KVVYHLTVHPDDVGKVIGKNGRIAKAIRTVVYASKTDGNKRIYLDIM) folds into the KH domain.

This sequence belongs to the KhpA RNA-binding protein family. Forms a complex with KhpB.

It is found in the cytoplasm. Its function is as follows. A probable RNA chaperone. Forms a complex with KhpB which binds to cellular RNA and controls its expression. Plays a role in peptidoglycan (PG) homeostasis and cell length regulation. The chain is RNA-binding protein KhpA from Oceanobacillus iheyensis (strain DSM 14371 / CIP 107618 / JCM 11309 / KCTC 3954 / HTE831).